The sequence spans 421 residues: MATQLPSPTATTSHSGNEPRRVIRESCNNCSAQKIRCGKQRPACARCVNKKLQCNYSYSQRSGRRSSSMNTQRGGPHIAFLPGIPDTPATMPDANAMSAMYGSLTTSSPGLQGTTLSPSIETSLEYDQNPFEDPNQYHDLTFDFLASPPNTEPLHSRSTSSNTGTDMGDTAMVDSEAFWHSFPSMPPQNLDALRSVSNHPIFDQDQVASFRRSLEKTVQHGHDCMALALQVVNDLSVTREPCLVATSNPMTGIETHQMQARDVDTVLFINRDAAQSVKKILDCSCSSDQAVSLACYLATSKIVDWYGAAIEAVGERTEDFSKNAGPKTSQGIMAERIIARPIYMGKYCLDPEVQRVVRAQVVLGELKEHVQPLLNSLPRFHITGLEAESDSSANGQQACILRNQLRNVIQSARDLNGTGSS.

The span at methionine 1–glycine 16 shows a compositional bias: polar residues. A disordered region spans residues methionine 1 to arginine 20. Positions cysteine 27–cysteine 54 form a DNA-binding region, zn(2)-C6 fungal-type.

The protein resides in the nucleus. Functionally, transcription regulator of the gene cluster that mediates the biosynthesis of elsinochrome C, a perelyenequinone phytotoxin structurally similar to cercosporin. The polypeptide is Elsinochrome C biosynthesis regulatory protein elcR (Phaeosphaeria nodorum (strain SN15 / ATCC MYA-4574 / FGSC 10173) (Glume blotch fungus)).